A 594-amino-acid chain; its full sequence is Actin-histidine N-methyltransferase (594 aa).

Residues Met-1–Pro-22 form a disordered region. Residues Gln-10 to Val-20 are compositionally biased toward polar residues. S-adenosyl-L-methionine is bound by residues Arg-75, Glu-104–Phe-106, Arg-254, Asp-275–His-279, and Ser-325–Phe-327. The 221-residue stretch at Glu-94–Gly-314 folds into the SET domain. The disordered stretch occupies residues Gly-551–Leu-594.

This sequence belongs to the class V-like SAM-binding methyltransferase superfamily. SETD3 actin-histidine methyltransferase family. As to quaternary structure, interacts with MYOD1. Post-translationally, phosphorylated by GSK3B, which is required for recognition by the SCF(FBXW7) complex and subsequent degradation. In terms of processing, ubiquitinated by the SCF(FBXW7) complex following phosphorylation by GSK3B, leading to its degradation by the proteasome. As to expression, prominently expressed in the heart and skeletal muscles and is also detected weakly in the stomach, small intestine, and colon.

It is found in the cytoplasm. Its subcellular location is the nucleus. The enzyme catalyses L-histidyl-[protein] + S-adenosyl-L-methionine = N(tele)-methyl-L-histidyl-[protein] + S-adenosyl-L-homocysteine + H(+). In terms of biological role, protein-histidine N-methyltransferase that specifically mediates 3-methylhistidine (tele-methylhistidine) methylation of actin at 'His-73'. Histidine methylation of actin is required for smooth muscle contraction of the laboring uterus during delivery. Does not have protein-lysine N-methyltransferase activity and probably only catalyzes histidine methylation of actin. This Mus musculus (Mouse) protein is Actin-histidine N-methyltransferase.